Here is a 141-residue protein sequence, read N- to C-terminus: Large ribosomal subunit protein uL11 (141 aa).

Belongs to the universal ribosomal protein uL11 family. Part of the ribosomal stalk of the 50S ribosomal subunit. Interacts with L10 and the large rRNA to form the base of the stalk. L10 forms an elongated spine to which L12 dimers bind in a sequential fashion forming a multimeric L10(L12)X complex. In terms of processing, one or more lysine residues are methylated.

Its function is as follows. Forms part of the ribosomal stalk which helps the ribosome interact with GTP-bound translation factors. This is Large ribosomal subunit protein uL11 from Tropheryma whipplei (strain TW08/27) (Whipple's bacillus).